Consider the following 288-residue polypeptide: Syntaxin-1A (288 aa).

Positions 1–13 (MKDRTQELRTAKD) are enriched in basic and acidic residues. The interval 1–20 (MKDRTQELRTAKDSDDDDDV) is disordered. Topologically, residues 1–265 (MKDRTQELRT…KYQSKARRKK (265 aa)) are cytoplasmic. Phosphoserine is present on residues Ser14, Ser64, and Ser95. A coiled-coil region spans residues 68-109 (DEKTKEELEELMSDIKKTANKVRSKLKSIEQSIEQEEGLNRS). Ser188 is subject to Phosphoserine; by DAPK1. The 63-residue stretch at 192 to 254 (LSEIETRHSE…ERAVSDTKKA (63 aa)) folds into the t-SNARE coiled-coil homology domain. Glycyl lysine isopeptide (Lys-Gly) (interchain with G-Cter in SUMO) cross-links involve residues Lys252, Lys253, and Lys256. The chain crosses the membrane as a helical; Anchor for type IV membrane protein span at residues 266-288 (IMIVICCVVLGIVIASTFGGIFG).

The protein belongs to the syntaxin family. As to quaternary structure, part of the SNARE core complex containing SNAP25, VAMP2 and STX1A; this complex constitutes the basic catalytic machinery of the complex neurotransmitter release apparatus. The SNARE complex interacts with CPLX1. Interacts with STXBP1. The interaction with STXBP1 promotes assembly of the SNARE complex. Interacts (via C-terminus) with KCNB1 (via C-terminus); the interaction increases in a calcium-dependent manner and induces a pore-independent enhancement of exocytosis in neuroendocrine cells, chromaffin cells, pancreatic beta cells and from the soma of dorsal root ganglia (DRG) neurons. Interacts with SYTL4. Interacts with STXBP6. Interacts with PLCL1 (via C2 domain). Interacts with OTOF. Interacts with LGI3. Interacts (via the H3 domain) with SLC6A4 (via the N-terminus); this interaction regulates SLC4A6 channel conductance in thalamocortical neurons. Interacts with SYT6 and SYT8; the interaction is Ca(2+)-dependent. Interacts with VAMP8. Interacts with SNAP23. Interacts with VAPA and SYBU. Interacts with PRRT2. Interacts with SEPT8. Interacts with STXBP5L. Interacts with synaptotagmin-1/SYT1. Interacts with SEPTIN5; in the cerebellar cortex. Interacts with SEPTIN4; in the striatum. Phosphorylated by CK2. Phosphorylation at Ser-188 by DAPK1 significantly decreases its interaction with STXBP1. In terms of processing, sumoylated, sumoylation is required for regulation of synaptic vesicle endocytosis. Post-translationally, (Microbial infection) Targeted and hydrolyzed by C.botulinum neurotoxin type C (BoNT/C) which inhibits neurotransmitter release. Probably hydrolyzes the 253-Lys-|-Ala-254 bond.

It localises to the cytoplasmic vesicle. The protein localises to the secretory vesicle. It is found in the synaptic vesicle membrane. Its subcellular location is the synapse. The protein resides in the synaptosome. It localises to the cell membrane. In terms of biological role, plays an essential role in hormone and neurotransmitter calcium-dependent exocytosis and endocytosis. Part of the SNARE (Soluble NSF Attachment Receptor) complex composed of SNAP25, STX1A and VAMP2 which mediates the fusion of synaptic vesicles with the presynaptic plasma membrane. STX1A and SNAP25 are localized on the plasma membrane while VAMP2 resides in synaptic vesicles. The pairing of the three SNAREs from the N-terminal SNARE motifs to the C-terminal anchors leads to the formation of the SNARE complex, which brings membranes into close proximity and results in final fusion. Participates in the calcium-dependent regulation of acrosomal exocytosis in sperm. Also plays an important role in the exocytosis of hormones such as insulin or glucagon-like peptide 1 (GLP-1). This Bos taurus (Bovine) protein is Syntaxin-1A (STX1A).